The sequence spans 276 residues: Probable endonuclease 4 (276 aa).

Zn(2+) contacts are provided by His67, His107, Glu142, Asp176, His179, His211, Asp224, His226, and Glu256.

The protein belongs to the AP endonuclease 2 family. Requires Zn(2+) as cofactor.

It catalyses the reaction Endonucleolytic cleavage to 5'-phosphooligonucleotide end-products.. Functionally, endonuclease IV plays a role in DNA repair. It cleaves phosphodiester bonds at apurinic or apyrimidinic (AP) sites, generating a 3'-hydroxyl group and a 5'-terminal sugar phosphate. The sequence is that of Probable endonuclease 4 from Methanosphaera stadtmanae (strain ATCC 43021 / DSM 3091 / JCM 11832 / MCB-3).